The sequence spans 424 residues: CinA-like protein (424 aa).

The protein belongs to the CinA family.

In Shewanella frigidimarina (strain NCIMB 400), this protein is CinA-like protein.